The sequence spans 38 residues: Mu/omega-theraphotoxin-Mb1b (38 aa).

Cystine bridges form between Cys-7–Cys-21, Cys-14–Cys-26, and Cys-20–Cys-33. Ser-38 is subject to Serine amide.

Belongs to the neurotoxin 10 (Hwtx-1) family. 28 (Jztx-11) subfamily. Expressed by the venom gland.

It localises to the secreted. Its function is as follows. Paralytic toxin on insects that inhibits voltage-gated sodium (Nav) and calcium (Cav) channels in P.americana (American cockroach) dorsal unpaired median (DUM) neurons, and also inhibits the B.germanica (German cockroach) Nav channel (BgNaV1). May act as a gating-modifier toxin on Nav and as a pore blocker on Cav. In vivo, reversibly paralyzes both L.cuprina (Australian sheep blowfly) and M.domestica (housefly), but does not affect larvae of H.armigera (cotton bollworms). The sequence is that of Mu/omega-theraphotoxin-Mb1b from Monocentropus balfouri (Socotra Island blue baboon tarantula).